Reading from the N-terminus, the 72-residue chain is Probable neurotoxin pcD-996 (72 aa).

The N-terminal stretch at M1–S19 is a signal peptide. The LCN-type CS-alpha/beta domain maps to R21–R72. 3 disulfide bridges follow: C35–C56, C42–C66, and C46–C68. Residue R72 is a propeptide, removed by a carboxypeptidase.

The protein belongs to the long (3 C-C) scorpion toxin superfamily. As to expression, expressed by the venom gland.

The protein resides in the secreted. The chain is Probable neurotoxin pcD-996 from Androctonus australis (Sahara scorpion).